The chain runs to 308 residues: Cap-specific mRNA (nucleoside-2'-O-)-methyltransferase (308 aa).

MRNA is bound at residue Y30. S-adenosyl-L-methionine-binding residues include Q46, Y74, G76, G80, D103, R105, V124, and D147. The interval P177–L257 is binding to NPH-I. The active-site For methyltransferase activity is K183. Residues R185 to F188, D190, S213 to E215, and E241 each bind mRNA.

This sequence belongs to the class I-like SAM-binding methyltransferase superfamily. Poxvirus/kinetoplastid 2'-O-MTase family. As to quaternary structure, interacts with poly(A) polymerase catalytic subunit OPG063. Interacts with OPG109 and OPG123; these interactions might help linking transcription to capping and polyadenylation.

The protein resides in the virion. It carries out the reaction a 5'-end (N(7)-methyl 5'-triphosphoguanosine)-ribonucleoside in mRNA + S-adenosyl-L-methionine = a 5'-end (N(7)-methyl 5'-triphosphoguanosine)-(2'-O-methyl-ribonucleoside) in mRNA + S-adenosyl-L-homocysteine + H(+). Its function is as follows. Displays methyltransferase, positive regulation of the poly(A) polymerase and transcription elongation activities. Involved in the modification of both mRNA ends and in intermediate and late gene positive transcription elongation. At the mRNAs 5' end, methylates the ribose 2' OH group of the first transcribed nucleotide, thereby producing a 2'-O-methylpurine cap. At the 3' end, functions as a processivity factor which stimulates the activity of the viral poly(A) polymerase OPG063 that creates mRNA's poly(A) tail. In the presence of OPG102, OPG063 does not dissociate from the RNA allowing tail elongation to around 250 adenylates. The chain is Cap-specific mRNA (nucleoside-2'-O-)-methyltransferase (OPG102) from Fowlpox virus (strain NVSL) (FPV).